Reading from the N-terminus, the 138-residue chain is Small ribosomal subunit protein uS9 (138 aa).

Basic and acidic residues predominate over residues 100 to 118; the sequence is PENRPPLKTEGYLTRDPRA. A disordered region spans residues 100 to 138; that stretch reads PENRPPLKTEGYLTRDPRAKERKKYGLHKARKAPQYSKR. Residues 119–138 are compositionally biased toward basic residues; that stretch reads KERKKYGLHKARKAPQYSKR.

It belongs to the universal ribosomal protein uS9 family.

This is Small ribosomal subunit protein uS9 from Trichormus variabilis (strain ATCC 29413 / PCC 7937) (Anabaena variabilis).